The primary structure comprises 171 residues: 3-hydroxydecanoyl-[acyl-carrier-protein] dehydratase (171 aa).

Histidine 70 is an active-site residue.

Belongs to the thioester dehydratase family. FabA subfamily. As to quaternary structure, homodimer.

It localises to the cytoplasm. The catalysed reaction is a (3R)-hydroxyacyl-[ACP] = a (2E)-enoyl-[ACP] + H2O. It carries out the reaction (3R)-hydroxydecanoyl-[ACP] = (2E)-decenoyl-[ACP] + H2O. It catalyses the reaction (2E)-decenoyl-[ACP] = (3Z)-decenoyl-[ACP]. Its pathway is lipid metabolism; fatty acid biosynthesis. Functionally, necessary for the introduction of cis unsaturation into fatty acids. Catalyzes the dehydration of (3R)-3-hydroxydecanoyl-ACP to E-(2)-decenoyl-ACP and then its isomerization to Z-(3)-decenoyl-ACP. Can catalyze the dehydratase reaction for beta-hydroxyacyl-ACPs with saturated chain lengths up to 16:0, being most active on intermediate chain length. The sequence is that of 3-hydroxydecanoyl-[acyl-carrier-protein] dehydratase from Colwellia psychrerythraea (strain 34H / ATCC BAA-681) (Vibrio psychroerythus).